The following is a 620-amino-acid chain: Chaperone protein HscA homolog (620 aa).

This sequence belongs to the heat shock protein 70 family.

Chaperone involved in the maturation of iron-sulfur cluster-containing proteins. Has a low intrinsic ATPase activity which is markedly stimulated by HscB. The protein is Chaperone protein HscA homolog of Neisseria meningitidis serogroup A / serotype 4A (strain DSM 15465 / Z2491).